Consider the following 285-residue polypeptide: 4-hydroxybenzoate octaprenyltransferase (285 aa).

Transmembrane regions (helical) follow at residues 28-48, 86-106, 110-130, 133-153, 165-185, 210-230, 232-252, and 262-284; these read LWAMWMAAGGPPAWGLFWIFV, IAAWEALAVAAVLALVAFALV, NALTKWLAVVAAVVAGTYPFF, FFAIPQAYLGIAFGFGIPMAF, WLMLLANVFWAVAYDTAYAMV, IMLCYAAFLALMAWAGVLLGL, WPYWVGLAAAAGCAGYHYTLI, and AAFRHNNWLGACVFAGTAVAYAI.

It belongs to the UbiA prenyltransferase family. Mg(2+) is required as a cofactor.

It is found in the cell inner membrane. It catalyses the reaction all-trans-octaprenyl diphosphate + 4-hydroxybenzoate = 4-hydroxy-3-(all-trans-octaprenyl)benzoate + diphosphate. Its pathway is cofactor biosynthesis; ubiquinone biosynthesis. Catalyzes the prenylation of para-hydroxybenzoate (PHB) with an all-trans polyprenyl group. Mediates the second step in the final reaction sequence of ubiquinone-8 (UQ-8) biosynthesis, which is the condensation of the polyisoprenoid side chain with PHB, generating the first membrane-bound Q intermediate 3-octaprenyl-4-hydroxybenzoate. The polypeptide is 4-hydroxybenzoate octaprenyltransferase (Cupriavidus necator (strain ATCC 17699 / DSM 428 / KCTC 22496 / NCIMB 10442 / H16 / Stanier 337) (Ralstonia eutropha)).